The chain runs to 149 residues: Cytochrome c-555 (149 aa).

Positions 1-20 are cleaved as a signal peptide; that stretch reads MKRTMIVVTTLLLGAGAVMA. 4 residues coordinate heme c: methionine 32, cysteine 137, cysteine 140, and histidine 141.

Monomer. Binds 1 heme c group covalently per subunit.

Its subcellular location is the periplasm. Its function is as follows. Low-spin monoheme cytochrome. This chain is Cytochrome c-555 (cycC), found in Bradyrhizobium diazoefficiens (strain JCM 10833 / BCRC 13528 / IAM 13628 / NBRC 14792 / USDA 110).